Here is a 498-residue protein sequence, read N- to C-terminus: Mitogen-activated protein kinase 15 (498 aa).

Residues 13-304 enclose the Protein kinase domain; it reads YKIEEVIGKG…AEEALADPYF (292 aa). ATP is bound by residues 19–27 and Lys42; that span reads IGKGSYGVV. Asp139 (proton acceptor) is an active-site residue. Thr175 is modified (phosphothreonine). Residues 175-177 carry the TXY motif; that stretch reads TDY. At Tyr177 the chain carries Phosphotyrosine. Disordered stretches follow at residues 388 to 411 and 470 to 498; these read STAA…SDDR and STAE…GSYP. Residues 486–498 are compositionally biased toward polar residues; that stretch reads LATNTVSPRGSYP.

It belongs to the protein kinase superfamily. CMGC Ser/Thr protein kinase family. MAP kinase subfamily. Dually phosphorylated on Thr-175 and Tyr-177, which activates the enzyme.

The enzyme catalyses L-seryl-[protein] + ATP = O-phospho-L-seryl-[protein] + ADP + H(+). The catalysed reaction is L-threonyl-[protein] + ATP = O-phospho-L-threonyl-[protein] + ADP + H(+). Its activity is regulated as follows. Activated by threonine and tyrosine phosphorylation. The protein is Mitogen-activated protein kinase 15 (MPK15) of Oryza sativa subsp. japonica (Rice).